The following is a 521-amino-acid chain: Tetratricopeptide repeat and J domain-containing co-chaperone DNJ1 (521 aa).

The first 21 residues, 1 to 21, serve as a signal peptide directing secretion; that stretch reads MHLNLAGLAVAATAFLATASA. TPR repeat units follow at residues 33–66, 67–100, 102–134, 176–209, 211–244, 315–348, and 349–382; these read VSNL…DPTN, YLSL…KPGF, GAHL…PKSA, PHLR…KPGD, SPHI…DPDS, LENL…NPDS, and FWGL…RPDQ. In terms of domain architecture, J spans 404–473; the sequence is DYYKVLGVEN…ELRARFDRGD (70 aa). Residues 464–474 are compositionally biased toward basic and acidic residues; that stretch reads ELRARFDRGDD. Residues 464–521 are disordered; sequence ELRARFDRGDDPNSQERPNPFQGQGNPFGGGHPFMFQQGGGGGGPNIKFQFGGQPFGF. Residues 489–508 are compositionally biased toward gly residues; that stretch reads NPFGGGHPFMFQQGGGGGGP. A compositionally biased stretch (low complexity) spans 509–521; sequence NIKFQFGGQPFGF.

The protein resides in the endoplasmic reticulum lumen. Functionally, endoplasmic reticulum co-chaperone required for the of virulence factors such as PG1, the major endopolygalacturonase produced during the infection of tomato plants. In Fusarium oxysporum f. sp. lycopersici (strain 4287 / CBS 123668 / FGSC 9935 / NRRL 34936) (Fusarium vascular wilt of tomato), this protein is Tetratricopeptide repeat and J domain-containing co-chaperone DNJ1.